Reading from the N-terminus, the 986-residue chain is Ephrin type-A receptor 4 (986 aa).

The first 19 residues, 1-19, serve as a signal peptide directing secretion; it reads MAGIFYFALFSCLFGICDA. Residues 20 to 547 are Extracellular-facing; it reads VTGSRVYPAN…RIIGDGANST (528 aa). In terms of domain architecture, Eph LBD spans 30–209; sequence EVTLLDSRSV…FYKKCPLTVR (180 aa). Residues Asn235, Asn340, and Asn408 are each glycosylated (N-linked (GlcNAc...) asparagine). 2 Fibronectin type-III domains span residues 328-439 and 440-537; these read PPSA…TNQA and APSS…TVPS. The N-linked (GlcNAc...) asparagine glycan is linked to Asn545. The helical transmembrane segment at 548 to 569 threads the bilayer; it reads VLLVSVSGSVVLVVILIAAFVI. Topologically, residues 570–986 are cytoplasmic; it reads SRRRSKYSKA…QQMHGRMVPV (417 aa). 2 positions are modified to phosphotyrosine; by autocatalysis: Tyr596 and Tyr602. Residues 621–882 enclose the Protein kinase domain; it reads IKIEKVIGVG…QIVNMLDKLI (262 aa). ATP-binding positions include 627 to 635 and Lys653; that span reads IGVGEFGEV. Residue Asp746 is the Proton acceptor of the active site. A phosphotyrosine; by autocatalysis mark is found at Tyr779 and Tyr928. In terms of domain architecture, SAM spans 911 to 975; the sequence is SAVVSVGDWL…LSSVQAMRTQ (65 aa). Positions 984-986 match the PDZ-binding motif; sequence VPV.

The protein belongs to the protein kinase superfamily. Tyr protein kinase family. Ephrin receptor subfamily. As to quaternary structure, heterotetramer upon binding of the ligand. The heterotetramer is composed of an ephrin dimer and a receptor dimer. Oligomerization is probably required to induce biological responses. Interacts (phosphorylated at position Tyr-602) with FYN. Interacts with CDK5, CDK5R1 and NGEF; upon activation by EFNA1 induces NGEF phosphorylation by the kinase CDK5. Interacts with CHN1; effector of EPHA4 in axon guidance linking EPHA4 activation to RAC1 regulation. Interacts (via PDZ motif) with SIPA1L1 (via PDZ domain); controls neuronal morphology through regulation of the RAP1 (RAP1A or RAP1B) and RAP2 (RAP2A, RAP2B or RAP2C) GTPases. Forms a ternary complex composed of ADAM10, CADH1 and EPHA4; within the complex, CADH1 is cleaved by ADAM10 which disrupts adherens junctions. In terms of tissue distribution, ubiquitous.

It localises to the cell membrane. It is found in the cell projection. The protein resides in the axon. The protein localises to the dendrite. Its subcellular location is the postsynaptic density membrane. It localises to the early endosome. It is found in the cell junction. The protein resides in the adherens junction. It carries out the reaction L-tyrosyl-[protein] + ATP = O-phospho-L-tyrosyl-[protein] + ADP + H(+). Functionally, receptor tyrosine kinase which binds membrane-bound ephrin family ligands residing on adjacent cells, leading to contact-dependent bidirectional signaling into neighboring cells. The signaling pathway downstream of the receptor is referred to as forward signaling while the signaling pathway downstream of the ephrin ligand is referred to as reverse signaling. Highly promiscuous, it has the unique property among Eph receptors to bind and to be physiologically activated by both GPI-anchored ephrin-A and transmembrane ephrin-B ligands including EFNA1 and EFNB3. Upon activation by ephrin ligands, modulates cell morphology and integrin-dependent cell adhesion through regulation of the Rac, Rap and Rho GTPases activity. Plays an important role in the development of the nervous system controlling different steps of axonal guidance including the establishment of the corticospinal projections. May also control the segregation of motor and sensory axons during neuromuscular circuit development. In addition to its role in axonal guidance plays a role in synaptic plasticity. Activated by EFNA1 phosphorylates CDK5 at 'Tyr-15' which in turn phosphorylates NGEF regulating RHOA and dendritic spine morphogenesis. In the nervous system, also plays a role in repair after injury preventing axonal regeneration and in angiogenesis playing a role in central nervous system vascular formation. Additionally, its promiscuity makes it available to participate in a variety of cell-cell signaling regulating for instance the development of the thymic epithelium. During development of the cochlear organ of Corti, regulates pillar cell separation by forming a ternary complex with ADAM10 and CADH1 which facilitates the cleavage of CADH1 by ADAM10 and disruption of adherens junctions. Phosphorylates CAPRIN1, promoting CAPRIN1-dependent formation of a membraneless compartment. In Homo sapiens (Human), this protein is Ephrin type-A receptor 4 (EPHA4).